The primary structure comprises 248 residues: DNA polymerase sliding clamp 2 (248 aa).

This sequence belongs to the PCNA family. The subunits circularize to form a toroid; DNA passes through its center. Replication factor C (RFC) is required to load the toroid on the DNA. Forms a dimeric complex with PCNA3 and trimeric complexes PCNA123 and PCNA323; does not form homotrimers. Crystal structures show a heterotetramer of 2 PCNA2 and 2 PCNA3, which would be large enough to clamp a Holliday junction.

Functionally, sliding clamp subunit that acts as a moving platform for DNA processing. Responsible for tethering the catalytic subunit of DNA polymerase and other proteins to DNA during high-speed replication. Both trimeric complexes inhibit DNA ligase and both 3'-5' and 5'-3' activity of Hel308 (Hjm) helicase, but stimulate Hjc, the Holliday junction cleavage enzyme. The chain is DNA polymerase sliding clamp 2 from Sulfurisphaera tokodaii (strain DSM 16993 / JCM 10545 / NBRC 100140 / 7) (Sulfolobus tokodaii).